The sequence spans 311 residues: Methionyl-tRNA formyltransferase (311 aa).

110–113 (SLLP) is a binding site for (6S)-5,6,7,8-tetrahydrofolate.

It belongs to the Fmt family.

It carries out the reaction L-methionyl-tRNA(fMet) + (6R)-10-formyltetrahydrofolate = N-formyl-L-methionyl-tRNA(fMet) + (6S)-5,6,7,8-tetrahydrofolate + H(+). Functionally, attaches a formyl group to the free amino group of methionyl-tRNA(fMet). The formyl group appears to play a dual role in the initiator identity of N-formylmethionyl-tRNA by promoting its recognition by IF2 and preventing the misappropriation of this tRNA by the elongation apparatus. The protein is Methionyl-tRNA formyltransferase of Streptococcus pneumoniae (strain Taiwan19F-14).